The sequence spans 843 residues: Leucine--tRNA ligase (843 aa).

Residues 61 to 71 carry the 'HIGH' region motif; sequence PYPSGDLHMGH. Positions 606 to 610 match the 'KMSKS' region motif; that stretch reads AMSKS. Position 609 (K609) interacts with ATP.

It belongs to the class-I aminoacyl-tRNA synthetase family.

The protein resides in the cytoplasm. It carries out the reaction tRNA(Leu) + L-leucine + ATP = L-leucyl-tRNA(Leu) + AMP + diphosphate. The sequence is that of Leucine--tRNA ligase from Arthrobacter sp. (strain FB24).